Here is a 1538-residue protein sequence, read N- to C-terminus: CLIP-associating protein 1 (1538 aa).

HEAT repeat units lie at residues 87–124 (AQIG…QAAN) and 163–200 (LTLS…HVGE). The interval 235 to 292 (SANDKNFDDEDSVDGNRPSSASSTSSKAPPSSRRNVGMGTTRRLGSSTLGSKSSAAKE) is disordered. Ser246 is modified (phosphoserine). A compositionally biased stretch (low complexity) spans 251–268 (RPSSASSTSSKAPPSSRR). HEAT repeat units lie at residues 405–440 (HGAE…IRHT) and 441–477 (HIPR…EWQT). The segment at 543–783 (SDSIVSLPQS…DRFGLGQPGR (241 aa)) is disordered. Residues Ser545, Ser548, Ser558, Ser559, and Ser568 each carry the phosphoserine modification. A compositionally biased stretch (low complexity) spans 548–567 (SLPQSDRSSSSSQESLNRPL). Over residues 574 to 594 (TGSTTSRASTVSTKSVSTTGS) the composition is skewed to low complexity. Ser600 carries the post-translational modification Phosphoserine. The span at 606 to 628 (AAASAKSKVSSSSGTTPFSSAAA) shows a compositional bias: low complexity. Phosphoserine is present on residues Ser636, Ser646, Ser647, and Ser649. Residues 645–658 (QSSGSATNVASTPD) are compositionally biased toward polar residues. Phosphothreonine is present on Thr656. Residues 662-785 (RSRAKVVSQS…FGLGQPGRIP (124 aa)) form an interaction with microtubules, MAPRE1 and MAPRE3 region. Positions 673–692 (RSRSANPAGAGSRSSSPGKL) are enriched in low complexity. 4 positions are modified to phosphoserine: Ser684, Ser688, Ser695, and Ser705. A compositionally biased stretch (gly residues) spans 693–705 (LGSGYGGLTGGSS). Thr711 is subject to Phosphothreonine. The residue at position 714 (Ser714) is a Phosphoserine. The span at 724–733 (QGCSRETSPN) shows a compositional bias: polar residues. A phosphoserine mark is found at Ser787, Ser797, and Ser823. The HEAT 5 repeat unit spans residues 974 to 1011 (QQFNILMRFIVDQTQTPNLKVKVAILKYIESLARQMDP). Disordered regions lie at residues 1080 to 1120 (HLKN…CSHG) and 1136 to 1156 (AKHP…SHKA). Positions 1082-1097 (KNSSNTSVGSPSNTIG) are enriched in polar residues. Ser1091 carries the phosphoserine modification. Phosphothreonine occurs at positions 1095 and 1099. Residues 1106-1115 (SRTSPLTSPT) are compositionally biased toward low complexity. Ser1113 carries the post-translational modification Phosphoserine. Phosphoserine is present on residues Ser1196 and Ser1223. The tract at residues 1215-1238 (VSRDGGAASPATEGRGGSEVEGGR) is disordered. Residues 1254–1538 (RAFPGPRARD…SSSSDVSTHS (285 aa)) form an interaction with CLIP2 region. Positions 1254 to 1538 (RAFPGPRARD…SSSSDVSTHS (285 aa)) are interaction with PHLDB2 and RSN. The segment at 1256-1538 (FPGPRARDYN…SSSSDVSTHS (283 aa)) is localization to kinetochores. A coiled-coil region spans residues 1299–1330 (DHSDLVADLLKELSNHNERVEERKGALLELLK). 2 HEAT repeats span residues 1342–1379 (EHFK…NQPA) and 1460–1497 (QLLV…VIGE).

The protein belongs to the CLASP family. As to quaternary structure, interacts with CLIP2, ERC1, MAPRE1, MAPRE3, microtubules, PHLDB2 and RSN. The interaction with ERC1 may be mediated by PHLDB2. Interacts with GCC2; recruits CLASP1 to Golgi membranes. Interacts with MACF1. Interacts with mtcl2 and MTCL1.

The protein resides in the cytoplasm. Its subcellular location is the cytoskeleton. It localises to the microtubule organizing center. It is found in the centrosome. The protein localises to the chromosome. The protein resides in the centromere. Its subcellular location is the kinetochore. It localises to the spindle. It is found in the golgi apparatus. The protein localises to the trans-Golgi network. Functionally, microtubule plus-end tracking protein that promotes the stabilization of dynamic microtubules. Involved in the nucleation of noncentrosomal microtubules originating from the trans-Golgi network (TGN). Required for the polarization of the cytoplasmic microtubule arrays in migrating cells towards the leading edge of the cell. May act at the cell cortex to enhance the frequency of rescue of depolymerizing microtubules by attaching their plus-ends to cortical platforms composed of ERC1 and PHLDB2. This cortical microtubule stabilizing activity is regulated at least in part by phosphatidylinositol 3-kinase signaling. Also performs a similar stabilizing function at the kinetochore which is essential for the bipolar alignment of chromosomes on the mitotic spindle. The chain is CLIP-associating protein 1 (CLASP1) from Homo sapiens (Human).